A 461-amino-acid polypeptide reads, in one-letter code: Cysteine--tRNA ligase (461 aa).

A Zn(2+)-binding site is contributed by Cys28. Positions 30–40 (ITIYDLCHIGH) match the 'HIGH' region motif. Residues Cys209, His234, and Glu238 each coordinate Zn(2+). Positions 266-270 (KMSKS) match the 'KMSKS' region motif. Lys269 provides a ligand contact to ATP.

Belongs to the class-I aminoacyl-tRNA synthetase family. In terms of assembly, monomer. Zn(2+) is required as a cofactor.

It is found in the cytoplasm. It catalyses the reaction tRNA(Cys) + L-cysteine + ATP = L-cysteinyl-tRNA(Cys) + AMP + diphosphate. The polypeptide is Cysteine--tRNA ligase (Yersinia pseudotuberculosis serotype O:3 (strain YPIII)).